Consider the following 950-residue polypeptide: MIGALARKLFGSANDRRVKGYQARVNAINALEPELAKLTDEQLKARTAEFKAQLAEGKTLDDILVPAFATVREASKRTLGQRHFDVQLIGGMVLHEGDIAEMKTGEGKTLVATLAVYLNALAGKGVHVVTVNDYLARRDAGWMSQIYGFLGLTTGVIVHGLDDAERKLAYACDITYGTNNEYGFDYLRDNMKYRLEDMVQRGHYFAIVDEVDSILIDEARTPLIISGPLDDRSDFYNTIDTFVPKLDKSDYDVDEKQRTVTLTEAGMEKIETLLRDAGQLKGESLYDVENVSVVHHINQALRAHTLFTRDKDYIVRDGEVVIIDEFTGRMMPGRRYSEGLHQALEAKEHVQVQPENQTLASITFQNYFRMYEKLAGMTGTAATEADELFDIYKLEVVEIPTNLPVARLDEDDEVYRTQQEKYAAILAEIERANSRLQPVLVGTASIEKSEVLAAYLKQHGYKQIDFGSERALDKLYAAARAGKPAKLFAVLNARFHEQEAYIVAEAGVPGAITIATNMAGRGTDIKLGGSLEMRIQQETAGITDETEKAAKIEQIKADIARFREIVLKAEETVEIEPAKGSKPAKTVVKPGGLYIIGSERHESRRIDNQLRGRSGRQGDPGRSKFFLSLEDDLMRIFGSDRLDSMLTRLGLKEGEAIIHPWINKALEKAQQKVEARNFDIRKNLLKFDNVQNDQRKVIFDQRVELMQDESVAETIADMRHAFIDDLVSKHVPEHAYAEQWDVAGLKEELKRVLDIELPVDEWAKEEGIADEELLKRIETHADERMAAKVGQWGPDVMRYVEKTILLQTLDHLWREHLVMLDHLRQVIGLRGYGQRDPLQEYKSEAFTLFEAMIAHLREAVTAQLMRVEIVPPEEQQPVLPPMQAHHANPTTGEDEMAFANVSLVPSSGAAPVPAEARNPNDPSTWGKVGRNEDCPCGSGKKYKHCHGRYA.

ATP contacts are provided by residues Gln87, 105–109 (GEGKT), and Asp524. The tract at residues 908-932 (GAAPVPAEARNPNDPSTWGKVGRNE) is disordered. 4 residues coordinate Zn(2+): Cys934, Cys936, Cys945, and His946.

Belongs to the SecA family. Monomer and homodimer. Part of the essential Sec protein translocation apparatus which comprises SecA, SecYEG and auxiliary proteins SecDF-YajC and YidC. Zn(2+) serves as cofactor.

The protein resides in the cell inner membrane. It localises to the cytoplasm. It catalyses the reaction ATP + H2O + cellular proteinSide 1 = ADP + phosphate + cellular proteinSide 2.. Functionally, part of the Sec protein translocase complex. Interacts with the SecYEG preprotein conducting channel. Has a central role in coupling the hydrolysis of ATP to the transfer of proteins into and across the cell membrane, serving both as a receptor for the preprotein-SecB complex and as an ATP-driven molecular motor driving the stepwise translocation of polypeptide chains across the membrane. This chain is Protein translocase subunit SecA, found in Bradyrhizobium sp. (strain BTAi1 / ATCC BAA-1182).